The following is a 543-amino-acid chain: Terpineol synthase, chloroplastic (543 aa).

Residues 1 to 22 (MNTEPSPNHYSAISSSDQNLTR) form a disordered region. Arg-263, Asp-300, Asp-304, Arg-435, and Asn-438 together coordinate (2E)-geranyl diphosphate. 2 residues coordinate Mg(2+): Asp-300 and Asp-304. The DDXXD motif signature appears at 300–304 (DDVYD). Mg(2+)-binding residues include Asn-438, Thr-442, and Glu-446.

Belongs to the terpene synthase family. Tpsb subfamily. As to quaternary structure, monomer. Requires Mg(2+) as cofactor. It depends on Mn(2+) as a cofactor. In terms of tissue distribution, confined to flowers.

Its subcellular location is the plastid. The protein localises to the chloroplast. It catalyses the reaction (2E)-geranyl diphosphate + H2O = (S)-alpha-terpineol + diphosphate. The enzyme catalyses (2E)-geranyl diphosphate = sabinene + diphosphate. The catalysed reaction is (2E)-geranyl diphosphate = beta-myrcene + diphosphate. It carries out the reaction (2E)-geranyl diphosphate = limonene + diphosphate. It catalyses the reaction (2E)-geranyl diphosphate + H2O = 1,8-cineole + diphosphate. The protein operates within secondary metabolite biosynthesis; terpenoid biosynthesis. Its function is as follows. Monoterpene synthase (TPS) involved in the biosynthesis of monoterpene natural products of the 'cineole cassette', volatile compounds present in floral scent. Catalyzes the conversion of (2E)-geranyl diphosphate (GPP) into alpha-terpineol and, as minor products, sabinene, beta-myrcene, limonene and 1,8-cineole. This Nicotiana alata (Winged tobacco) protein is Terpineol synthase, chloroplastic.